We begin with the raw amino-acid sequence, 454 residues long: Nuclear distribution protein PAC1-1 (454 aa).

Positions 9-41 (QAEELHRALIAYLSSNNLTSTAAALRAEIGLGE) constitute a LisH domain. The disordered stretch occupies residues 71 to 93 (RHTSQLSNATPTSRQNKDPVNWL). Positions 73–84 (TSQLSNATPTSR) are enriched in polar residues. WD repeat units lie at residues 104–145 (SHRQ…RTIK), 147–187 (HTKT…KNIR), 191–236 (GHDH…CVKT), 239–278 (GHAEWVRDVCPSVDGRFILSTSDDYTSRLWDVSIANPEPK), 283–342 (GHEH…IKIL), 344–383 (GHDNWVRGLVFHPGGKYLLSASDDYTLRCWDLTQEGRCVK), and 388–450 (AHAH…LNVR).

Belongs to the WD repeat LIS1/nudF family. In terms of assembly, self-associates. Interacts with NDL1 and dynein.

It is found in the cytoplasm. The protein localises to the cytoskeleton. Its subcellular location is the spindle pole. Its function is as follows. Positively regulates the activity of the minus-end directed microtubule motor protein dynein. May enhance dynein-mediated microtubule sliding by targeting dynein to the microtubule plus end. Required for nuclear migration during vegetative growth as well as development. Required for retrograde early endosome (EE) transport from the hyphal tip. Required for localization of dynein to the mitotic spindle poles. Recruits additional proteins to the dynein complex at SPBs. In Chaetomium globosum (strain ATCC 6205 / CBS 148.51 / DSM 1962 / NBRC 6347 / NRRL 1970) (Soil fungus), this protein is Nuclear distribution protein PAC1-1.